Here is a 216-residue protein sequence, read N- to C-terminus: Superoxide dismutase [Cu-Zn], chloroplastic (216 aa).

The N-terminal 62 residues, 1–62 (MACHSALAAV…ASPRSMVVVA (62 aa)), are a transit peptide targeting the chloroplast. Positions 108, 110, and 125 each coordinate Cu cation. Residues cysteine 119 and cysteine 208 are joined by a disulfide bond. Zn(2+) is bound by residues histidine 125, histidine 133, histidine 142, and aspartate 145. Histidine 182 contacts Cu cation.

This sequence belongs to the Cu-Zn superoxide dismutase family. Homotetramer. The cofactor is Cu cation. Requires Zn(2+) as cofactor.

It localises to the plastid. The protein resides in the chloroplast. It catalyses the reaction 2 superoxide + 2 H(+) = H2O2 + O2. In terms of biological role, destroys radicals which are normally produced within the cells and which are toxic to biological systems. This chain is Superoxide dismutase [Cu-Zn], chloroplastic (SODCP), found in Zantedeschia aethiopica (White calla lily).